The sequence spans 251 residues: Hydroxyacylglutathione hydrolase (251 aa).

Residues His53, His55, Asp57, His58, His110, Asp127, and His165 each contribute to the Zn(2+) site.

The protein belongs to the metallo-beta-lactamase superfamily. Glyoxalase II family. Monomer. Zn(2+) serves as cofactor.

The enzyme catalyses an S-(2-hydroxyacyl)glutathione + H2O = a 2-hydroxy carboxylate + glutathione + H(+). It functions in the pathway secondary metabolite metabolism; methylglyoxal degradation; (R)-lactate from methylglyoxal: step 2/2. Its function is as follows. Thiolesterase that catalyzes the hydrolysis of S-D-lactoyl-glutathione to form glutathione and D-lactic acid. The polypeptide is Hydroxyacylglutathione hydrolase (Citrobacter koseri (strain ATCC BAA-895 / CDC 4225-83 / SGSC4696)).